The sequence spans 119 residues: Phosphoribosyl-AMP cyclohydrolase (119 aa).

D77 serves as a coordination point for Mg(2+). C78 lines the Zn(2+) pocket. Mg(2+) contacts are provided by D79 and D81. The Zn(2+) site is built by C94 and C101.

It belongs to the PRA-CH family. As to quaternary structure, homodimer. Mg(2+) serves as cofactor. Zn(2+) is required as a cofactor.

The protein resides in the cytoplasm. It catalyses the reaction 1-(5-phospho-beta-D-ribosyl)-5'-AMP + H2O = 1-(5-phospho-beta-D-ribosyl)-5-[(5-phospho-beta-D-ribosylamino)methylideneamino]imidazole-4-carboxamide. It functions in the pathway amino-acid biosynthesis; L-histidine biosynthesis; L-histidine from 5-phospho-alpha-D-ribose 1-diphosphate: step 3/9. Catalyzes the hydrolysis of the adenine ring of phosphoribosyl-AMP. The sequence is that of Phosphoribosyl-AMP cyclohydrolase from Cereibacter sphaeroides (strain ATCC 17029 / ATH 2.4.9) (Rhodobacter sphaeroides).